The following is a 179-amino-acid chain: ATP synthase subunit delta (179 aa).

It belongs to the ATPase delta chain family. F-type ATPases have 2 components, F(1) - the catalytic core - and F(0) - the membrane proton channel. F(1) has five subunits: alpha(3), beta(3), gamma(1), delta(1), epsilon(1). F(0) has three main subunits: a(1), b(2) and c(10-14). The alpha and beta chains form an alternating ring which encloses part of the gamma chain. F(1) is attached to F(0) by a central stalk formed by the gamma and epsilon chains, while a peripheral stalk is formed by the delta and b chains.

The protein localises to the cell membrane. Functionally, f(1)F(0) ATP synthase produces ATP from ADP in the presence of a proton or sodium gradient. F-type ATPases consist of two structural domains, F(1) containing the extramembraneous catalytic core and F(0) containing the membrane proton channel, linked together by a central stalk and a peripheral stalk. During catalysis, ATP synthesis in the catalytic domain of F(1) is coupled via a rotary mechanism of the central stalk subunits to proton translocation. In terms of biological role, this protein is part of the stalk that links CF(0) to CF(1). It either transmits conformational changes from CF(0) to CF(1) or is implicated in proton conduction. The protein is ATP synthase subunit delta of Staphylococcus epidermidis (strain ATCC 35984 / DSM 28319 / BCRC 17069 / CCUG 31568 / BM 3577 / RP62A).